We begin with the raw amino-acid sequence, 455 residues long: Phosphoglucosamine mutase (455 aa).

Ser104 serves as the catalytic Phosphoserine intermediate. Residues Ser104, Asp253, Asp255, and Asp257 each contribute to the Mg(2+) site. Ser104 is subject to Phosphoserine.

This sequence belongs to the phosphohexose mutase family. Mg(2+) serves as cofactor. Activated by phosphorylation.

It carries out the reaction alpha-D-glucosamine 1-phosphate = D-glucosamine 6-phosphate. Its function is as follows. Catalyzes the conversion of glucosamine-6-phosphate to glucosamine-1-phosphate. The sequence is that of Phosphoglucosamine mutase from Psychrobacter cryohalolentis (strain ATCC BAA-1226 / DSM 17306 / VKM B-2378 / K5).